The sequence spans 347 residues: Phenylalanine--tRNA ligase alpha subunit (347 aa).

Mg(2+) is bound at residue E265.

It belongs to the class-II aminoacyl-tRNA synthetase family. Phe-tRNA synthetase alpha subunit type 1 subfamily. Tetramer of two alpha and two beta subunits. The cofactor is Mg(2+).

It is found in the cytoplasm. The enzyme catalyses tRNA(Phe) + L-phenylalanine + ATP = L-phenylalanyl-tRNA(Phe) + AMP + diphosphate + H(+). This Mycolicibacterium paratuberculosis (strain ATCC BAA-968 / K-10) (Mycobacterium paratuberculosis) protein is Phenylalanine--tRNA ligase alpha subunit.